A 214-amino-acid polypeptide reads, in one-letter code: Chalcone isomerase-like protein 1 (214 aa).

The protein belongs to the chalcone isomerase family. As to expression, mostly expressed in glandular trichomes (lupulin glands), and, to a lower extent, in cones, cones bracts, leaves, stems and roots.

The protein resides in the cytoplasm. The catalysed reaction is a chalcone = a flavanone.. It functions in the pathway secondary metabolite biosynthesis; flavonoid biosynthesis. In terms of biological role, involved in the biosynthesis of prenylated phenolics natural products which contribute to the bitter taste of beer and display broad biological activities. Involved in anthocyanin biosynthesis. Polyketide binding proteins (PBP) which reduces the catalytic activities of CHS_H1 and PT1L and prevents demethylxanthohumol (DMX) production, by binding to DMX and naringenin chalcone (NC) to stabilize the chalconoids ring-opened structure. The sequence is that of Chalcone isomerase-like protein 1 from Humulus lupulus (European hop).